Reading from the N-terminus, the 143-residue chain is Nucleoside diphosphate kinase (143 aa).

6 residues coordinate ATP: Lys-11, Phe-59, Arg-87, Thr-93, Arg-104, and Asn-114. His-117 functions as the Pros-phosphohistidine intermediate in the catalytic mechanism.

Belongs to the NDK family. As to quaternary structure, homotetramer. Mg(2+) serves as cofactor.

It localises to the cytoplasm. The catalysed reaction is a 2'-deoxyribonucleoside 5'-diphosphate + ATP = a 2'-deoxyribonucleoside 5'-triphosphate + ADP. The enzyme catalyses a ribonucleoside 5'-diphosphate + ATP = a ribonucleoside 5'-triphosphate + ADP. In terms of biological role, major role in the synthesis of nucleoside triphosphates other than ATP. The ATP gamma phosphate is transferred to the NDP beta phosphate via a ping-pong mechanism, using a phosphorylated active-site intermediate. This is Nucleoside diphosphate kinase from Tolumonas auensis (strain DSM 9187 / NBRC 110442 / TA 4).